We begin with the raw amino-acid sequence, 510 residues long: NAD(P)H-quinone oxidoreductase subunit 2, chloroplastic (510 aa).

13 consecutive transmembrane segments (helical) span residues 28–48 (DGSFIFPECILIFGLILLLII), 57–77 (IPWLYFISSTSLVMSITTLLF), 99–119 (IFQFLILLCSTLCIPLSVEYI), 124–144 (MALTEFLLFVLTATLGGMFLC), 149–169 (LITIFVAPECFSLCSYLLSGY), 183–203 (YLLMGGTSSSILVHGFSWLYG), 227–247 (PGISIALIFITVGIGFKLSPA), 295–315 (WHLLLEILAILSMILGNLIAI), 323–343 (MLAYSSIGQIGYVIIGIIVGD), 354–374 (YMLFYISMNLGTFACIVLFGL), 395–415 (ALSLALCLLSLGGLPPLAGFF), 418–438 (LYLFWCGWQAGLYLLVLIGLL), and 484–504 (MIVCVIASTIPGISMNPIIAI).

It belongs to the complex I subunit 2 family. As to quaternary structure, NDH is composed of at least 16 different subunits, 5 of which are encoded in the nucleus.

Its subcellular location is the plastid. It localises to the chloroplast thylakoid membrane. The enzyme catalyses a plastoquinone + NADH + (n+1) H(+)(in) = a plastoquinol + NAD(+) + n H(+)(out). It catalyses the reaction a plastoquinone + NADPH + (n+1) H(+)(in) = a plastoquinol + NADP(+) + n H(+)(out). In terms of biological role, NDH shuttles electrons from NAD(P)H:plastoquinone, via FMN and iron-sulfur (Fe-S) centers, to quinones in the photosynthetic chain and possibly in a chloroplast respiratory chain. The immediate electron acceptor for the enzyme in this species is believed to be plastoquinone. Couples the redox reaction to proton translocation, and thus conserves the redox energy in a proton gradient. The sequence is that of NAD(P)H-quinone oxidoreductase subunit 2, chloroplastic from Silene latifolia (White campion).